Consider the following 119-residue polypeptide: Ribonuclease P protein component (119 aa).

Belongs to the RnpA family. As to quaternary structure, consists of a catalytic RNA component (M1 or rnpB) and a protein subunit.

It carries out the reaction Endonucleolytic cleavage of RNA, removing 5'-extranucleotides from tRNA precursor.. Functionally, RNaseP catalyzes the removal of the 5'-leader sequence from pre-tRNA to produce the mature 5'-terminus. It can also cleave other RNA substrates such as 4.5S RNA. The protein component plays an auxiliary but essential role in vivo by binding to the 5'-leader sequence and broadening the substrate specificity of the ribozyme. The sequence is that of Ribonuclease P protein component from Bacillus cereus (strain ATCC 14579 / DSM 31 / CCUG 7414 / JCM 2152 / NBRC 15305 / NCIMB 9373 / NCTC 2599 / NRRL B-3711).